Reading from the N-terminus, the 1383-residue chain is DNA-directed RNA polymerase subunit beta'' (1383 aa).

Residues Cys220, Cys289, Cys296, and Cys299 each coordinate Zn(2+).

The protein belongs to the RNA polymerase beta' chain family. RpoC2 subfamily. As to quaternary structure, in plastids the minimal PEP RNA polymerase catalytic core is composed of four subunits: alpha, beta, beta', and beta''. When a (nuclear-encoded) sigma factor is associated with the core the holoenzyme is formed, which can initiate transcription. Zn(2+) is required as a cofactor.

It localises to the plastid. The protein localises to the chloroplast. It catalyses the reaction RNA(n) + a ribonucleoside 5'-triphosphate = RNA(n+1) + diphosphate. In terms of biological role, DNA-dependent RNA polymerase catalyzes the transcription of DNA into RNA using the four ribonucleoside triphosphates as substrates. The sequence is that of DNA-directed RNA polymerase subunit beta'' from Oenothera parviflora (Small-flowered evening primrose).